The following is a 192-amino-acid chain: dTTP/UTP pyrophosphatase (192 aa).

Aspartate 71 serves as the catalytic Proton acceptor.

The protein belongs to the Maf family. YhdE subfamily. A divalent metal cation is required as a cofactor.

It is found in the cytoplasm. The enzyme catalyses dTTP + H2O = dTMP + diphosphate + H(+). It carries out the reaction UTP + H2O = UMP + diphosphate + H(+). Its function is as follows. Nucleoside triphosphate pyrophosphatase that hydrolyzes dTTP and UTP. May have a dual role in cell division arrest and in preventing the incorporation of modified nucleotides into cellular nucleic acids. The polypeptide is dTTP/UTP pyrophosphatase (Pseudoalteromonas atlantica (strain T6c / ATCC BAA-1087)).